The chain runs to 348 residues: A-kinase anchor protein 7 isoform gamma (348 aa).

The tract at residues 1–25 is disordered; it reads MERPEAGGINSNECENVSRKKKMSE. AMP is bound by residues Thr129 and 219–221; that span reads HLT. Residues Thr129 and 219–221 each bind CMP; that span reads HLT. Residues 294 to 348 form a PKA-RII-alpha subunit binding domain region; the sequence is AELVRLSKRLVENAVLKAVQQYLEETQNKNKPGEGSSVKTEAADQNGNDNENNRK. The segment at 295–319 is RI-alpha-binding; sequence ELVRLSKRLVENAVLKAVQQYLEET. The interval 296–309 is RII-binding; it reads LVRLSKRLVENAVL. Residues 316-348 form a disordered region; the sequence is LEETQNKNKPGEGSSVKTEAADQNGNDNENNRK. Residues 330 to 348 are compositionally biased toward polar residues; the sequence is SVKTEAADQNGNDNENNRK.

As to quaternary structure, binds cAMP-dependent protein kinase (PKA). Interacts with PRKCA; only the cytoplasmic form is capable of interacting with PRKCA. In terms of tissue distribution, expressed in brain, heart, lung, pancreas and placenta.

Its subcellular location is the nucleus. The protein localises to the cytoplasm. Its function is as follows. Probably targets cAMP-dependent protein kinase (PKA) to the cellular membrane or cytoskeletal structures. The membrane-associated form reduces epithelial sodium channel (ENaC) activity, whereas the free cytoplasmic form may negatively regulate ENaC channel feedback inhibition by intracellular sodium. In Homo sapiens (Human), this protein is A-kinase anchor protein 7 isoform gamma (AKAP7).